We begin with the raw amino-acid sequence, 113 residues long: 14 kDa zinc-binding protein (113 aa).

The region spanning 3–113 (IFGKIISKEI…GGRQMNWPPG (111 aa)) is the HIT domain. The short motif at 97 to 101 (HIHVH) is the Histidine triad motif element.

Homodimer.

In Brassica juncea (Indian mustard), this protein is 14 kDa zinc-binding protein.